The primary structure comprises 64 residues: Large ribosomal subunit protein uL29 (64 aa).

Belongs to the universal ribosomal protein uL29 family.

The sequence is that of Large ribosomal subunit protein uL29 from Paraburkholderia phytofirmans (strain DSM 17436 / LMG 22146 / PsJN) (Burkholderia phytofirmans).